The following is an 84-amino-acid chain: Small ribosomal subunit protein bS16 (84 aa).

Belongs to the bacterial ribosomal protein bS16 family.

The sequence is that of Small ribosomal subunit protein bS16 from Acaryochloris marina (strain MBIC 11017).